The primary structure comprises 1514 residues: MDVLELLRASATGSYTALFSDAWCQYVSKQITNSMYLYCALGVLSMVFLAWFMYFKRLARIRLRDEASRSMSAVNSSSGGDLRGLRFRKRDKMLFYGRRMLRKMKNVSGQMYSSGKGYKRRAVMRFARRILQLRRDNMPLEMRTVEPPAEYLEETIDGSDRVPPDALYMLQSIRIFGHFEKPVFLRLCKHTQLLELMAGDYLFKITDPDDSVYIVQSGMINVYISNADGSTLSLKTVRKGESVTSLLSFIDVLSGNPSYYKTVTAKAIEKSVVIRLPMEAFEEVFQDNPDVMIRVIQVIMIRLQRVLFTALRNYLGLNAELVQNHMRFKSSTIMAPSTHSSQCSRQTGSQPTLGVPAPTCSNTTTTASPTTANTVHSGLAGANGVIGQSRPPISPSRHSREEHTLSDPNPNPDVINTSVGGASGTSMYAEVHGDAPNVDVFHQQQHSVGNLSTRRGSISQMAPDLGPALSQPGLGQGQGLGPGVTGAPPLMTGAPASKIDMRLVHASAVDSLRKELGLPEEDSHIIEPFVEVRELEPNVTLITEGNSDDVCVWFVMTGTLAVYQANQDAARAKQQQEKNDMLIHFVHPGEIVGGLAMLTGEASAYTIRSRNNSRVAFIRRAAIYQIMRQRPRIVLDLGNGVVRRLSPLVRQCDYALDWIFLESGRAVYRQDEISDSTYIVLSGRMRSVITHPGGKKEIIGEYGKGDLVGIVEMITETSRTTTVLAVRDSELAKLPEGLFNAIKLRYPIVVTKLISFLSHRFLGTMQTRSSSAAPGGPVEANPVTHKYSTVALVPITDEVPLTPFTYELYHSLCAIGPVLRLTSDVVRKQLGPNIFEAANEYRLTSWLAQQEDRNIITLYQCDNALSAWTQRCMRQADVILIVGLGNGSHLVGKFEREIDRLAMRTQKELVLLYPETTNSKPANTLSWLNARPWVTKHHHVLCVKRIFTRKSQYRINDLYSRVLLSEPNMHSDFSRLARWLTGNSIGLVLGGGGARGAAHIGMLKAIQEAGIPIDMVGGVSIGALMGALWCSERNITTVTQKAREWSKKMTKWFLQLLDLTYPITSMFSGREFNKTIHDTFGDVSIEDLWIPYFTLTTDITASCHRIHTNGSLWRYVRSSMSLSGYMPPLCDPKDGHLLLDGGYVNNLPGQLWRYCRASMSIAGVFPPFCDYRDGHLLLDGCYTNNVPADVMHNLGAAHIIAIDVGSQDDTDLTNYGDDLSGWWLLYKKWNPFTSPVKVPDLPDIQSRLAYVSCVRQLEEVKNSDYCEYIRPPIDKYKTLAFGSFDEIRDVGYVFGKNYFENMAKAGRLGRFNQWFNKEPPKRGNHASLNEYTFIDLAQIVCRLPETNAGNSADIFSEDEDCDGYISEPTTLNTDRRRIQVPRAGNSLSFSENEMDSDVELDLQLDRKTEKSIHSAATSVARGSMRSREFHKLEQDRSVEITRLKDETERIMAPTNLDRKGDGQEQEKEPEQEQELETEEPNQENTEVEEEQRNQGEGNEDNKENKGGAYNETKN.

The Lumenal portion of the chain corresponds to 1–34 (MDVLELLRASATGSYTALFSDAWCQYVSKQITNS). The chain crosses the membrane as a helical span at residues 35 to 55 (MYLYCALGVLSMVFLAWFMYF). At 56 to 1514 (KRLARIRLRD…KGGAYNETKN (1459 aa)) the chain is on the cytoplasmic side. 175–302 (IFGHFEKPVF…IRVIQVIMIR (128 aa)) is an a nucleoside 3',5'-cyclic phosphate binding site. Residues 337 to 352 (STHSSQCSRQTGSQPT) show a composition bias toward polar residues. The segment at 337-418 (STHSSQCSRQ…NPNPDVINTS (82 aa)) is disordered. The span at 356–374 (PAPTCSNTTTTASPTTANT) shows a compositional bias: low complexity. At S457 the chain carries Phosphoserine. A nucleoside 3',5'-cyclic phosphate contacts are provided by residues 515 to 644 (ELGL…VVRR) and 633 to 760 (IVLD…LSHR). A PNPLA domain is found at 987–1153 (LVLGGGGARG…VNNLPGQLWR (167 aa)). A GXGXXG motif is present at residues 991–996 (GGGARG). The short motif at 1018 to 1022 (GVSIG) is the GXSXG element. S1020 functions as the Nucleophile in the catalytic mechanism. D1140 functions as the Proton acceptor in the catalytic mechanism. Positions 1140 to 1142 (DGG) match the DGA/G motif. S1234 carries the post-translational modification Phosphoserine. The disordered stretch occupies residues 1409–1514 (EKSIHSAATS…KGGAYNETKN (106 aa)). Composition is skewed to basic and acidic residues over residues 1425 to 1449 (RSREFHKLEQDRSVEITRLKDETER) and 1456 to 1470 (LDRKGDGQEQEKEPE). Acidic residues predominate over residues 1471-1489 (QEQELETEEPNQENTEVEE).

This sequence belongs to the NTE family. Interacts with Pka-C3; interaction inhibits the catalytic function of Pka-C3 and the esterase activity of sws.

It localises to the endoplasmic reticulum membrane. The enzyme catalyses a 1-acyl-sn-glycero-3-phosphocholine + H2O = sn-glycerol 3-phosphocholine + a fatty acid + H(+). Its function is as follows. Phospholipase B that deacylates intracellular phosphatidylcholine (PtdCho), generating glycerophosphocholine (GroPtdCho). This deacylation occurs at both sn-2 and sn-1 positions of PtdCho. Its specific chemical modification by certain organophosphorus (OP) compounds leads to distal axonopathy. Plays a role in the signaling mechanism between neurons and glia that regulates glia wrapping during development of the adult brain. Essential for membrane lipid homeostasis and cell survival in both neurons and glia of the adult brain. The protein is Neuropathy target esterase sws of Drosophila ananassae (Fruit fly).